The sequence spans 771 residues: ATP-dependent RNA helicase DRS1 (771 aa).

Disordered regions lie at residues 1–96 (MAKK…LDGF), 109–128 (VESNGDVTKKPISKDVDLDG), and 134–233 (GGLA…KPVE). The span at 28 to 46 (SDSEGENEIPDLEEESEVD) shows a compositional bias: acidic residues. Residues 33-84 (ENEIPDLEEESEVDQELKEEEKPKPKPKPKSKKNKKNKDINNDQEKTEEQEE) are a coiled coil. Over residues 47 to 56 (QELKEEEKPK) the composition is skewed to basic and acidic residues. Residues 57 to 68 (PKPKPKSKKNKK) show a composition bias toward basic residues. Positions 69–79 (NKDINNDQEKT) are enriched in basic and acidic residues. The segment covering 85-96 (INPNFTFSLDGF) has biased composition (polar residues). Acidic residues-rich tracts occupy residues 149 to 182 (KNDEVESEEVEEVEEDDEDEENEQEGDDDDDELA) and 197 to 233 (ADDDQDEQEPEDDDEGVEADMDEEYPGSDQEDEKPVE). The short motif at 258–286 (TTFQSLQLSRPVLKGLSQLGYTKPSPIQS) is the Q motif element. Residues 289-465 (IPIALLGKDI…QLSLQKPVRV (177 aa)) enclose the Helicase ATP-binding domain. 302 to 309 (AVTGSGKT) contributes to the ATP binding site. The DEAD box motif lies at 412 to 415 (DEAD). The Helicase C-terminal domain maps to 476 to 643 (KLVQEFVRIR…RNSKQGKAVS (168 aa)). Basic and acidic residues predominate over residues 695-717 (EKEIQSRPRRTWFESEKDKKHQT). Residues 695–771 (EKEIQSRPRR…KPKSNGKNKK (77 aa)) are disordered. 2 stretches are compositionally biased toward basic residues: residues 725 to 736 (KHGKKVNSHKRK) and 759 to 771 (VQKKPKSNGKNKK).

Belongs to the DEAD box helicase family. DDX27/DRS1 subfamily. In terms of assembly, associates with pre-ribosomal particles.

The protein localises to the nucleus. It localises to the nucleolus. The catalysed reaction is ATP + H2O = ADP + phosphate + H(+). In terms of biological role, ATP-binding RNA helicase involved in ribosome assembly. The chain is ATP-dependent RNA helicase DRS1 (DRS1) from Debaryomyces hansenii (strain ATCC 36239 / CBS 767 / BCRC 21394 / JCM 1990 / NBRC 0083 / IGC 2968) (Yeast).